We begin with the raw amino-acid sequence, 466 residues long: 3-isopropylmalate dehydratase large subunit (466 aa).

[4Fe-4S] cluster is bound by residues cysteine 347, cysteine 407, and cysteine 410.

Belongs to the aconitase/IPM isomerase family. LeuC type 1 subfamily. As to quaternary structure, heterodimer of LeuC and LeuD. The cofactor is [4Fe-4S] cluster.

It carries out the reaction (2R,3S)-3-isopropylmalate = (2S)-2-isopropylmalate. The protein operates within amino-acid biosynthesis; L-leucine biosynthesis; L-leucine from 3-methyl-2-oxobutanoate: step 2/4. In terms of biological role, catalyzes the isomerization between 2-isopropylmalate and 3-isopropylmalate, via the formation of 2-isopropylmaleate. This chain is 3-isopropylmalate dehydratase large subunit, found in Escherichia coli O139:H28 (strain E24377A / ETEC).